A 264-amino-acid chain; its full sequence is Putative serine carboxypeptidase-like 53 (264 aa).

The first 23 residues, 1-23 (MGKLQDWSITTCLFLFFLHASQT), serve as a signal peptide directing secretion. N65, N101, N153, and N184 each carry an N-linked (GlcNAc...) asparagine glycan.

It belongs to the peptidase S10 family.

Its subcellular location is the secreted. This chain is Putative serine carboxypeptidase-like 53 (SCPL53), found in Arabidopsis thaliana (Mouse-ear cress).